Here is a 317-residue protein sequence, read N- to C-terminus: Apolipoprotein E (317 aa).

Positions 1–18 (MKALWVALVVTLLAGCRA) are cleaved as a signal peptide. A run of 8 repeats spans residues 79–100 (ALMEETMKEVKAYKAELEEQLS), 101–122 (PVAQETRARLSKELQAAQARLG), 123–144 (TDMEDLRSRLAHYRNEVQAMLG), 145–166 (QTTDELRNRLASHLRKLRKRLL), 167–188 (RDAEDLQKRLAVYRAGAVEGAE), 189–210 (RSVSALRERLGPLVEQGRLGTA), 211–232 (TTSTLGSQPLRERAEAWGQKLR), and 233–254 (GRLEAVGARAQDRLDKMREQLE). Residues 79-254 (ALMEETMKEV…RLDKMREQLE (176 aa)) form an 8 X 22 AA approximate tandem repeats region. At M142 the chain carries Methionine sulfoxide. The LDL and other lipoprotein receptors binding stretch occupies residues 157–167 (HLRKLRKRLLR). Heparin is bound at residue 161 to 164 (LRKR). The segment at 209-289 (TATTSTLGSQ…GWFQPLVEDL (81 aa)) is lipid-binding and lipoprotein association. T211 carries an O-linked (GalNAc...) threonine glycan. 228–235 (GQKLRGRL) contacts heparin. The segment at 265–317 (SQMRLQAETFQARLKGWFQPLVEDLQRQWAGLVEKVQQLAVGTTPTPAASKNQ) is homooligomerization. The interval 277–289 (RLKGWFQPLVEDL) is specificity for association with VLDL. Residue T310 is glycosylated (O-linked (GalNAc...) threonine).

The protein belongs to the apolipoprotein A1/A4/E family. As to quaternary structure, homotetramer. May interact with ABCA1; functionally associated with ABCA1 in the biogenesis of HDLs. May interact with APP/A4 amyloid-beta peptide; the interaction is extremely stable in vitro but its physiological significance is unclear. May interact with MAPT. May interact with MAP2. In the cerebrospinal fluid, interacts with secreted SORL1. Interacts with PMEL; this allows the loading of PMEL luminal fragment on ILVs to induce fibril nucleation. In terms of processing, APOE exists as multiple glycosylated and sialylated glycoforms within cells and in plasma. The extent of glycosylation and sialylation are tissue and context specific. Post-translationally, glycated in plasma VLDL. Phosphorylated by FAM20C in the extracellular medium.

The protein localises to the secreted. It localises to the extracellular space. Its subcellular location is the extracellular matrix. It is found in the extracellular vesicle. The protein resides in the endosome. The protein localises to the multivesicular body. In terms of biological role, APOE is an apolipoprotein, a protein associating with lipid particles, that mainly functions in lipoprotein-mediated lipid transport between organs via the plasma and interstitial fluids. APOE is a core component of plasma lipoproteins and is involved in their production, conversion and clearance. Apolipoproteins are amphipathic molecules that interact both with lipids of the lipoprotein particle core and the aqueous environment of the plasma. As such, APOE associates with chylomicrons, chylomicron remnants, very low density lipoproteins (VLDL) and intermediate density lipoproteins (IDL) but shows a preferential binding to high-density lipoproteins (HDL). It also binds a wide range of cellular receptors including the LDL receptor/LDLR and the very low-density lipoprotein receptor/VLDLR that mediate the cellular uptake of the APOE-containing lipoprotein particles. Finally, APOE also has a heparin-binding activity and binds heparan-sulfate proteoglycans on the surface of cells, a property that supports the capture and the receptor-mediated uptake of APOE-containing lipoproteins by cells. The polypeptide is Apolipoprotein E (APOE) (Camelus dromedarius (Dromedary)).